Here is a 365-residue protein sequence, read N- to C-terminus: Outer membrane protein assembly factor BamC (365 aa).

The signal sequence occupies residues 1 to 16 (MLKKVTPLFLVAAVAA). A lipid anchor (N-palmitoyl cysteine) is attached at C17. The S-diacylglycerol cysteine moiety is linked to residue C17.

This sequence belongs to the BamC family. In terms of assembly, part of the Bam complex.

The protein resides in the cell outer membrane. Functionally, part of the outer membrane protein assembly complex, which is involved in assembly and insertion of beta-barrel proteins into the outer membrane. The protein is Outer membrane protein assembly factor BamC of Shewanella oneidensis (strain ATCC 700550 / JCM 31522 / CIP 106686 / LMG 19005 / NCIMB 14063 / MR-1).